The chain runs to 341 residues: Anthranilate phosphoribosyltransferase (341 aa).

Residues Gly-79, 82–83 (GD), Thr-87, 89–92 (NIST), 107–115 (KHGNRAASS), and Ala-119 each bind 5-phospho-alpha-D-ribose 1-diphosphate. Gly-79 serves as a coordination point for anthranilate. Ser-91 lines the Mg(2+) pocket. An anthranilate-binding site is contributed by Asn-110. Arg-165 lines the anthranilate pocket. Asp-224 and Glu-225 together coordinate Mg(2+).

This sequence belongs to the anthranilate phosphoribosyltransferase family. Homodimer. Requires Mg(2+) as cofactor.

It carries out the reaction N-(5-phospho-beta-D-ribosyl)anthranilate + diphosphate = 5-phospho-alpha-D-ribose 1-diphosphate + anthranilate. It functions in the pathway amino-acid biosynthesis; L-tryptophan biosynthesis; L-tryptophan from chorismate: step 2/5. In terms of biological role, catalyzes the transfer of the phosphoribosyl group of 5-phosphorylribose-1-pyrophosphate (PRPP) to anthranilate to yield N-(5'-phosphoribosyl)-anthranilate (PRA). The sequence is that of Anthranilate phosphoribosyltransferase from Lacticaseibacillus paracasei (strain ATCC 334 / BCRC 17002 / CCUG 31169 / CIP 107868 / KCTC 3260 / NRRL B-441) (Lactobacillus paracasei).